A 100-amino-acid chain; its full sequence is MATITDPRDIILAPVISEKSYGLIEDNVYTFVVHPDSNKTQIKIAIEKIFDVKVDSVNTANRQGKRKRTRTGFGKRKSTKRAIVKLAAGSKPIDLFGAPA.

This sequence belongs to the universal ribosomal protein uL23 family. As to quaternary structure, part of the 50S ribosomal subunit. Contacts protein L29, and trigger factor when it is bound to the ribosome.

One of the early assembly proteins it binds 23S rRNA. One of the proteins that surrounds the polypeptide exit tunnel on the outside of the ribosome. Forms the main docking site for trigger factor binding to the ribosome. The polypeptide is Large ribosomal subunit protein uL23 (Mycolicibacterium smegmatis (strain ATCC 700084 / mc(2)155) (Mycobacterium smegmatis)).